The following is a 443-amino-acid chain: UDP-N-acetylmuramate--L-alanine ligase (443 aa).

Residue 110–116 participates in ATP binding; it reads GAHGKTS.

This sequence belongs to the MurCDEF family.

Its subcellular location is the cytoplasm. It catalyses the reaction UDP-N-acetyl-alpha-D-muramate + L-alanine + ATP = UDP-N-acetyl-alpha-D-muramoyl-L-alanine + ADP + phosphate + H(+). It functions in the pathway cell wall biogenesis; peptidoglycan biosynthesis. Cell wall formation. In Streptococcus equi subsp. zooepidemicus (strain H70), this protein is UDP-N-acetylmuramate--L-alanine ligase.